The primary structure comprises 198 residues: Cytochrome c oxidase assembly protein CtaG (198 aa).

Over 1 to 12 (MADNGQADRKER) the chain is Cytoplasmic. A helical; Signal-anchor for type II membrane protein membrane pass occupies residues 13-35 (SNGVIVGTCLAFVAGMIGMAYAA). Over 36-198 (VPLYDMFCRV…QVKAKAENKL (163 aa)) the chain is Periplasmic.

It belongs to the COX11/CtaG family.

The protein localises to the cell inner membrane. In terms of biological role, exerts its effect at some terminal stage of cytochrome c oxidase synthesis, probably by being involved in the insertion of the copper B into subunit I. The protein is Cytochrome c oxidase assembly protein CtaG of Rhizobium meliloti (strain 1021) (Ensifer meliloti).